The chain runs to 726 residues: MDDVSKCPFSGGLKGFKNKDWWPNQLDLSVLHQHSNLSDPLGEAFDYAKEFKSLDLDALVKDLHALMTDSQEWWPADFGHYGPLFIRMAWHAAGTYRIGDGRGGAGTGQQRFAPLNSWPDNANLDKARRLLWPIKQKYGQKISWADLFVLTGNVALESMGFKTFGFGGGRADTWEPEQDIYWGPEGKWLADERYSGDRELAGSLAAVQMGLIYVNPEGPNGKPDPAAAARDIRETFARMAMNDEETVALIAGGHTFGKTHGAGDASLVGVEPEGADIAQQGLGWASKYASGKAGDTITSGLEVIWTTTPTKWSNNYFENLFNYEWELTKSPAGAHQWTPKGGAGAGTVPDAHDPSKRHAPSMLTTDIALRVDPAYEKISRRFLEHPDQFADAFARAWFKLTHRDMGPKARYLGPLVPKEELIWQDPVPALDHPVVDDKDVAALKAKILAAGLSVSQLVSTAWASASTFRGSDKRGGANGARIRLAPQKDWAINNPAELSKVLAKLEGIQKEFNGSATGGKKVSLADLIVLAGNAGVEAAAKKAGVEVTVPFAPGRTDASQEQTDVESFAVLEPTHDGFRNYLSGKQWLSGEELLVDKAQLLTLTAPETTVLVGGLRVLGANAAGSKHGVFTTQPEVLSNDFFVNLLDMGIAWTPVDQGEHTFEGRDRKSGAVKWTATRADLIFGSHSQLRALAEVYASSDAKQKFVKDFVAAWTKVMNLDRFELKA.

Positions 90–213 (WHAAGTYRIG…LAAVQMGLIY (124 aa)) form a cross-link, tryptophyl-tyrosyl-methioninium (Trp-Tyr) (with M-239). Histidine 91 serves as the catalytic Proton acceptor. A cross-link (tryptophyl-tyrosyl-methioninium (Tyr-Met) (with W-90)) is located at residues 213 to 239 (YVNPEGPNGKPDPAAAARDIRETFARM). Residue histidine 254 participates in heme b binding. A disordered region spans residues 338 to 359 (TPKGGAGAGTVPDAHDPSKRHA).

Belongs to the peroxidase family. Peroxidase/catalase subfamily. As to quaternary structure, homodimer or homotetramer. Requires heme b as cofactor. In terms of processing, formation of the three residue Trp-Tyr-Met cross-link is important for the catalase, but not the peroxidase activity of the enzyme.

It carries out the reaction H2O2 + AH2 = A + 2 H2O. The catalysed reaction is 2 H2O2 = O2 + 2 H2O. Bifunctional enzyme with both catalase and broad-spectrum peroxidase activity. This is Catalase-peroxidase from Bradyrhizobium sp. (strain ORS 278).